A 351-amino-acid polypeptide reads, in one-letter code: Probable galacturonosyltransferase-like 4 (351 aa).

Residues 1-8 (MASRSLSY) lie on the Cytoplasmic side of the membrane. Residues 9–29 (TQLLGLLSFILLLVTTTTMAV) traverse the membrane as a helical; Signal-anchor for type II membrane protein segment. At 30–351 (RVGVILHKPS…YRSSRHSLEE (322 aa)) the chain is on the lumenal side. 2 N-linked (GlcNAc...) asparagine glycosylation sites follow: Asn96 and Asn203.

The protein belongs to the glycosyltransferase 8 family.

The protein resides in the golgi apparatus membrane. The protein operates within glycan metabolism; pectin biosynthesis. May be involved in pectin and/or xylans biosynthesis in cell walls. The polypeptide is Probable galacturonosyltransferase-like 4 (GATL4) (Arabidopsis thaliana (Mouse-ear cress)).